Consider the following 257-residue polypeptide: Aspartate/glutamate leucyltransferase (257 aa).

It belongs to the R-transferase family. Bpt subfamily.

It is found in the cytoplasm. The catalysed reaction is N-terminal L-glutamyl-[protein] + L-leucyl-tRNA(Leu) = N-terminal L-leucyl-L-glutamyl-[protein] + tRNA(Leu) + H(+). It catalyses the reaction N-terminal L-aspartyl-[protein] + L-leucyl-tRNA(Leu) = N-terminal L-leucyl-L-aspartyl-[protein] + tRNA(Leu) + H(+). Functionally, functions in the N-end rule pathway of protein degradation where it conjugates Leu from its aminoacyl-tRNA to the N-termini of proteins containing an N-terminal aspartate or glutamate. The protein is Aspartate/glutamate leucyltransferase of Nitrobacter winogradskyi (strain ATCC 25391 / DSM 10237 / CIP 104748 / NCIMB 11846 / Nb-255).